The chain runs to 496 residues: MELNCVQFLRNKTILVTGATGFLAKVFVEKILRVQPNVKKLYLLVRASDNEAATKRLRTEVFEKELFKVLRQNLGDEKLNTLLYEKVVSVPGDIATDQLGINDSHLRERMQKEIDIVVNVAATTNFDERYDVGLGINTFGALNVLNFAKKCVKVQLLLHVSTAYVCGEKPGLIPEKPFIMEEIRNENGLQLDINLERELMKQRLKELNEQDCSEEDITLSMKELGMERAKLHGWPNTYVFTKSMGEMLLGKHKENLPLVIIRPTMITSTLSEPFPGWIEGLRTVDSVIIAYGKGVLKCFLVDVNSVCDMIPVDMVANAMITAAAKHAGGSGVHMVYHVGSSHQNPVTFGEIHEIAVRYFTKNPLRSRNGSLITVSKVRFIPTMALFSLYMTLRYKLPLQLLKLVDIIYPWRNGDKYGDKNRKIELVMRLVELYEPYVLFKGIFDDRNTKSLCANQKEEEIKNTEKLMFDFDPKGINWGDYLTNIHISGLVTHVLKK.

Belongs to the fatty acyl-CoA reductase family. As to expression, expressed in the endodermal cell layer surrounding the central vasculature in roots. Expressed in floral organs of very young unopened buds and receptacle of siliques.

It catalyses the reaction a long-chain fatty acyl-CoA + 2 NADPH + 2 H(+) = a long-chain primary fatty alcohol + 2 NADP(+) + CoA. Functionally, catalyzes the reduction of fatty acyl-CoA to fatty alcohols. Catalyzes specifically the formation of C18:0 fatty alcohol. Provides the fatty alcohols required for synthesis of suberin in roots, seed coat and wound-induced leaf tissue. Provides the fatty alcohols required for synthesis of alkyl hydroxycinnamates in root waxes. This chain is Probable fatty acyl-CoA reductase 5, found in Arabidopsis thaliana (Mouse-ear cress).